Here is a 198-residue protein sequence, read N- to C-terminus: Segregation and condensation protein B (198 aa).

Belongs to the ScpB family. Homodimer. Homodimerization may be required to stabilize the binding of ScpA to the Smc head domains. Component of a cohesin-like complex composed of ScpA, ScpB and the Smc homodimer, in which ScpA and ScpB bind to the head domain of Smc. The presence of the three proteins is required for the association of the complex with DNA.

It localises to the cytoplasm. Functionally, participates in chromosomal partition during cell division. May act via the formation of a condensin-like complex containing Smc and ScpA that pull DNA away from mid-cell into both cell halves. The sequence is that of Segregation and condensation protein B from Acetivibrio thermocellus (strain ATCC 27405 / DSM 1237 / JCM 9322 / NBRC 103400 / NCIMB 10682 / NRRL B-4536 / VPI 7372) (Clostridium thermocellum).